Reading from the N-terminus, the 317-residue chain is Beta-ketoacyl-[acyl-carrier-protein] synthase III (317 aa).

Catalysis depends on residues C112 and H244. The segment at 245 to 249 is ACP-binding; sequence QANLR. The active site involves N274.

This sequence belongs to the thiolase-like superfamily. FabH family. As to quaternary structure, homodimer.

The protein localises to the cytoplasm. The enzyme catalyses malonyl-[ACP] + acetyl-CoA + H(+) = 3-oxobutanoyl-[ACP] + CO2 + CoA. The protein operates within lipid metabolism; fatty acid biosynthesis. Functionally, catalyzes the condensation reaction of fatty acid synthesis by the addition to an acyl acceptor of two carbons from malonyl-ACP. Catalyzes the first condensation reaction which initiates fatty acid synthesis and may therefore play a role in governing the total rate of fatty acid production. Possesses both acetoacetyl-ACP synthase and acetyl transacylase activities. Its substrate specificity determines the biosynthesis of branched-chain and/or straight-chain of fatty acids. The polypeptide is Beta-ketoacyl-[acyl-carrier-protein] synthase III (Salmonella arizonae (strain ATCC BAA-731 / CDC346-86 / RSK2980)).